Here is a 141-residue protein sequence, read N- to C-terminus: Auxin-responsive protein SAUR64 (141 aa).

The protein belongs to the ARG7 family.

It is found in the cell membrane. In terms of biological role, may promote auxin-stimulated organ elongation, such as hypocotyls, stamen filaments and petals. The protein is Auxin-responsive protein SAUR64 of Arabidopsis thaliana (Mouse-ear cress).